We begin with the raw amino-acid sequence, 684 residues long: DNA-directed RNA polymerase subunit beta' (684 aa).

Cys-69, Cys-71, Cys-87, and Cys-90 together coordinate Zn(2+). Mg(2+)-binding residues include Asp-491, Asp-493, and Asp-495.

It belongs to the RNA polymerase beta' chain family. RpoC1 subfamily. As to quaternary structure, in plastids the minimal PEP RNA polymerase catalytic core is composed of four subunits: alpha, beta, beta', and beta''. When a (nuclear-encoded) sigma factor is associated with the core the holoenzyme is formed, which can initiate transcription. The cofactor is Mg(2+). Zn(2+) serves as cofactor.

Its subcellular location is the plastid. It localises to the chloroplast. It carries out the reaction RNA(n) + a ribonucleoside 5'-triphosphate = RNA(n+1) + diphosphate. In terms of biological role, DNA-dependent RNA polymerase catalyzes the transcription of DNA into RNA using the four ribonucleoside triphosphates as substrates. The sequence is that of DNA-directed RNA polymerase subunit beta' from Phaseolus vulgaris (Kidney bean).